The sequence spans 455 residues: P2X purinoceptor 5 (455 aa).

The Cytoplasmic segment spans residues 1-34 (MGQAAWKGFVLSLFDYKTAKFVVAKSKKVGLLYR). The chain crosses the membrane as a helical span at residues 35-55 (VLQLIILLYLLIWVFLIKKSY). Residues 56-341 (QDIDTSLQSA…SIIPTVINIG (286 aa)) lie on the Extracellular side of the membrane. ATP-binding residues include Lys-69 and Lys-71. A glycan (N-linked (GlcNAc...) asparagine) is linked at Asn-77. Intrachain disulfides connect Cys-118-Cys-169, Cys-129-Cys-152, and Cys-135-Cys-163. Residue Asn-157 is glycosylated (N-linked (GlcNAc...) asparagine). Position 189 (Thr-189) interacts with ATP. An N-linked (GlcNAc...) asparagine glycan is attached at Asn-202. 2 disulfide bridges follow: Cys-220-Cys-229 and Cys-263-Cys-272. Positions 294, 296, and 314 each coordinate ATP. The helical transmembrane segment at 342–362 (SGLALMGAGAFFCDLVLIYLI) threads the bilayer. Over 363–455 (RKSEFYRDKK…QSQILHPVKT (93 aa)) the chain is Cytoplasmic. Residues 384 to 401 (NVEVEANEMEQERPEDEP) are compositionally biased toward acidic residues. The segment at 384–422 (NVEVEANEMEQERPEDEPLERVRQDEQSQELAQSGRKQN) is disordered. Polar residues predominate over residues 412 to 422 (QELAQSGRKQN).

The protein belongs to the P2X receptor family. As to quaternary structure, functional P2XRs are organized as homomeric and heteromeric trimers. Homotrimer. Forms heterotrimer with P2RX1. Predominantly expressed in heart but are also present in brain, spinal cord and adrenal gland.

Its subcellular location is the cell membrane. It catalyses the reaction Na(+)(in) = Na(+)(out). The catalysed reaction is Ca(2+)(in) = Ca(2+)(out). It carries out the reaction chloride(in) = chloride(out). Activated by ATP. Slowly desensitizing. Not activated by ATP agonist alpha/beta-methylene-ATP. Highly sensitive to the antagonists suramin and PPADS. ATP-gated nonselective transmembrane cation channel. Permeable to potassium, sodium and calcium. Unlike other P2RX receptors, the P2X5 receptor is also permeable to chloride. Acts as an important regulator of inflammatory-related bone loss and osteoclast multinucleation. The protein is P2X purinoceptor 5 (P2rx5) of Rattus norvegicus (Rat).